The primary structure comprises 731 residues: MKLDKLFEKFLSLFKKETSELEDSDSTILRRSRSDRKKLAQVGPIRKFWRRYHLTKIILILGLSAGLLVGIYLFAVAKSTNVNDLQNALKTRTLIFDREEKEAGALSGQKGTYVELTDISKNLQNAVIATEDRSFYKNDGINYGRFFLAIVTAGRSGGGSTITQQLAKNAYLSQDQTVERKAKEFFLALELSKKYSKEQILTMYLNNAYFGNGVWGVEDASKKYFGVSASEVSLDQAATLAGMLKGPELYNPLNSVEDSTNRRDTVLQNMVAAGYIDKNQETEAAEVDMTSQLHDKYEGKISDYRYPSYFDAVVNEAVSKYNLTEEEIVNNGYRIYTELDQNYQANMQIVYENTSLFPRAEDGTFAQSGSVALEPKTGGVRGVVGQVADNDKTGFRNFNYATQSKRSPGSTIKPLVVYTPAVEAGWALNKQLDNHTMQYDSYKVDNYAGIKTSREVPMYQSLAESLNLPAVATVNDLGVDKAFEAGEKFGLNMEKVDRVLGVALGSGVETNPLQMAQAYAAFANEGLMPEAHFISRIENASGQVIASHKNSQKRVIDKSVADKMTSMMLGTFTNGTGISSSPADYVMAGKTGTTEAVFNPEYTSDQWVIGYTPDVVISHWLGFPTTDENHYLAGSTSNGAAHVFRNIANTILPYTPGSTFTVENAYKQNGIAPANTKRQVQTNDNSQTDDNLSDIRGRAQSLVDEASRAISDAKIKEKAQTIWDSIVNLFR.

Residues 1-56 (MKLDKLFEKFLSLFKKETSELEDSDSTILRRSRSDRKKLAQVGPIRKFWRRYHLTK) lie on the Cytoplasmic side of the membrane. The chain crosses the membrane as a helical; Signal-anchor for type II membrane protein span at residues 57 to 77 (IILILGLSAGLLVGIYLFAVA). The segment at 78–156 (KSTNVNDLQN…FLAIVTAGRS (79 aa)) is hydrophobic; associated with cytoplasmic membrane. Required for transglycosylase activity, but not for lipid II binding. Residues 78 to 300 (KSTNVNDLQN…SQLHDKYEGK (223 aa)) form a transglycosylase region. Over 78–731 (KSTNVNDLQN…IWDSIVNLFR (654 aa)) the chain is Extracellular. The active-site Proton donor; for transglycosylase activity is the glutamate 131. The tract at residues 301–731 (ISDYRYPSYF…IWDSIVNLFR (431 aa)) is transpeptidase. Serine 410 serves as the catalytic Acyl-ester intermediate; for transpeptidase activity. The interval 674–694 (ANTKRQVQTNDNSQTDDNLSD) is disordered. Residues 676–690 (TKRQVQTNDNSQTDD) show a composition bias toward polar residues.

It in the N-terminal section; belongs to the glycosyltransferase 51 family. This sequence in the C-terminal section; belongs to the transpeptidase family. In terms of assembly, homodimer. May also form higher order oligomers. Self-association may depend on its transmembrane and/or cytoplasmic regions. Interacts with MacP; interaction is required for the function of this protein.

It is found in the cell membrane. The protein resides in the secreted. It localises to the cell wall. It catalyses the reaction Preferential cleavage: (Ac)2-L-Lys-D-Ala-|-D-Ala. Also transpeptidation of peptidyl-alanyl moieties that are N-acyl substituents of D-alanine.. The catalysed reaction is [GlcNAc-(1-&gt;4)-Mur2Ac(oyl-L-Ala-gamma-D-Glu-L-Lys-D-Ala-D-Ala)](n)-di-trans,octa-cis-undecaprenyl diphosphate + beta-D-GlcNAc-(1-&gt;4)-Mur2Ac(oyl-L-Ala-gamma-D-Glu-L-Lys-D-Ala-D-Ala)-di-trans,octa-cis-undecaprenyl diphosphate = [GlcNAc-(1-&gt;4)-Mur2Ac(oyl-L-Ala-gamma-D-Glu-L-Lys-D-Ala-D-Ala)](n+1)-di-trans,octa-cis-undecaprenyl diphosphate + di-trans,octa-cis-undecaprenyl diphosphate + H(+). It participates in cell wall biogenesis; peptidoglycan biosynthesis. Cell wall formation. Synthesis of cross-linked peptidoglycan (PG) from the lipid intermediates. Binds dansylated lipid II and catalyzes the polymerization of glycan chains. Hydrolyzes S2d (N-benzoyl-D-alanylmercaptoacetic acid) molecule, a synthetic thiolester analog of cell wall stem peptide. Active against bocillin, a fluorescent penicillin. No transpeptidase activity with non-fluorescent lysine-containing lipid II as substrate. This chain is Penicillin-binding protein 2a, found in Streptococcus pneumoniae serotype 2 (strain D39 / NCTC 7466).